The sequence spans 357 residues: tRNA/tmRNA (uracil-C(5))-methyltransferase (357 aa).

Residues Gln185, Tyr212, Asn217, Glu233, and Asp291 each coordinate S-adenosyl-L-methionine. Cys316 functions as the Nucleophile in the catalytic mechanism. The active-site Proton acceptor is the Glu350.

This sequence belongs to the class I-like SAM-binding methyltransferase superfamily. RNA M5U methyltransferase family. TrmA subfamily.

It catalyses the reaction uridine(54) in tRNA + S-adenosyl-L-methionine = 5-methyluridine(54) in tRNA + S-adenosyl-L-homocysteine + H(+). The enzyme catalyses uridine(341) in tmRNA + S-adenosyl-L-methionine = 5-methyluridine(341) in tmRNA + S-adenosyl-L-homocysteine + H(+). In terms of biological role, dual-specificity methyltransferase that catalyzes the formation of 5-methyluridine at position 54 (m5U54) in all tRNAs, and that of position 341 (m5U341) in tmRNA (transfer-mRNA). This Campylobacter hominis (strain ATCC BAA-381 / DSM 21671 / CCUG 45161 / LMG 19568 / NCTC 13146 / CH001A) protein is tRNA/tmRNA (uracil-C(5))-methyltransferase.